We begin with the raw amino-acid sequence, 406 residues long: 2,3-bisphosphoglycerate-independent phosphoglycerate mutase (406 aa).

The tract at residues Asn-156–Ala-183 is disordered. Residues Lys-160–Glu-174 show a composition bias toward basic and acidic residues.

This sequence belongs to the BPG-independent phosphoglycerate mutase family. A-PGAM subfamily.

It carries out the reaction (2R)-2-phosphoglycerate = (2R)-3-phosphoglycerate. It functions in the pathway carbohydrate degradation; glycolysis; pyruvate from D-glyceraldehyde 3-phosphate: step 3/5. Catalyzes the interconversion of 2-phosphoglycerate and 3-phosphoglycerate. The chain is 2,3-bisphosphoglycerate-independent phosphoglycerate mutase from Thermoplasma volcanium (strain ATCC 51530 / DSM 4299 / JCM 9571 / NBRC 15438 / GSS1).